The primary structure comprises 254 residues: Ribonuclease HII (254 aa).

One can recognise an RNase H type-2 domain in the interval 70–254 (QAIAGIDEVG…TFEPVKSMLG (185 aa)). A divalent metal cation contacts are provided by Asp76, Glu77, and Asp168.

The protein belongs to the RNase HII family. Requires Mn(2+) as cofactor. Mg(2+) serves as cofactor.

It localises to the cytoplasm. The enzyme catalyses Endonucleolytic cleavage to 5'-phosphomonoester.. Endonuclease that specifically degrades the RNA of RNA-DNA hybrids. In Streptococcus gordonii (strain Challis / ATCC 35105 / BCRC 15272 / CH1 / DL1 / V288), this protein is Ribonuclease HII.